Here is a 165-residue protein sequence, read N- to C-terminus: MTRNKYFILLSCLMVLSPSQGQEAEEDLPSARITCPEGSNAYSSYCYYFMEDHLSWAEADLFCQNMNSGYLVSVLSQAEGNFLASLIKESGTTAANVWIGLHDPKNNRRWHWSSGSLFLYKSWDTGYPNNSNRGYCVSVTSNSGYKKWRDNSCDAQLSFVCKFKA.

An N-terminal signal peptide occupies residues 1–21 (MTRNKYFILLSCLMVLSPSQG). Gln22 carries the post-translational modification Pyrrolidone carboxylic acid. The region spanning 33 to 163 (ITCPEGSNAY…DAQLSFVCKF (131 aa)) is the C-type lectin domain. 3 disulfides stabilise this stretch: Cys35/Cys46, Cys63/Cys161, and Cys136/Cys153. An N-linked (GlcNAc...) asparagine glycan is attached at Asn129.

As to expression, expressed only in regenerating islets, but not in normal pancreatic islets, insulinomas or regenerating liver.

Its subcellular location is the secreted. Its function is as follows. Might act as an inhibitor of spontaneous calcium carbonate precipitation. The chain is Lithostathine (Reg1) from Rattus norvegicus (Rat).